The chain runs to 102 residues: MYAIIETGGKQYRVEEGSKIVVEKLAAQAGSEISLDKVLMVGGAECKVGAPYLAGAAVTAEVVDHGRGPKIKVFKRWRRNDSRKMRGHRQDFTTIRVKSING.

It belongs to the bacterial ribosomal protein bL21 family. As to quaternary structure, part of the 50S ribosomal subunit. Contacts protein L20.

In terms of biological role, this protein binds to 23S rRNA in the presence of protein L20. The sequence is that of Large ribosomal subunit protein bL21 from Desulfovibrio desulfuricans (strain ATCC 27774 / DSM 6949 / MB).